A 362-amino-acid polypeptide reads, in one-letter code: Sulfoquinovose monooxygenase (362 aa).

The protein belongs to the SsuD family.

It carries out the reaction 6-sulfo-D-quinovose + FMNH2 + O2 = 6-dehydro-D-glucose + FMN + sulfite + H2O + 2 H(+). Functionally, part of the alkanesulfonate monooxygenase (sulfo-ASMO) pathway, a D-sulfoquinovose degradation pathway that enables the complete utilization of all carbons within sulfoquinovose (SQ) with concomitant production of inorganic sulfite. Catalyzes the oxidative desulfurization of sulfoquinovose to sulfite and 6-dehydro-D-glucose. The protein is Sulfoquinovose monooxygenase of Novosphingobium aromaticivorans (strain ATCC 700278 / DSM 12444 / CCUG 56034 / CIP 105152 / NBRC 16084 / F199).